Consider the following 129-residue polypeptide: Endocuticle structural glycoprotein SgAbd-9 (129 aa).

Position 1 is a pyrrolidone carboxylic acid (Gln-1). The region spanning 28–98 (DGSYTFSYES…VGNVVAPAIS (71 aa)) is the Chitin-binding type R&amp;R domain. An O-linked (HexNAc...) threonine glycan is attached at Thr-120.

Functionally, component of the abdominal endocuticle. The sequence is that of Endocuticle structural glycoprotein SgAbd-9 from Schistocerca gregaria (Desert locust).